The sequence spans 497 residues: Acetyl-coenzyme A carboxylase carboxyl transferase subunit beta, chloroplastic (497 aa).

The CoA carboxyltransferase N-terminal domain maps to 230–497 (LWVQCENCYG…FFPLNQNSIK (268 aa)). Residues cysteine 234, cysteine 237, cysteine 253, and cysteine 256 each contribute to the Zn(2+) site. A C4-type zinc finger spans residues 234–256 (CENCYGLNYKKFLKSKMNICEQC).

This sequence belongs to the AccD/PCCB family. Acetyl-CoA carboxylase is a heterohexamer composed of biotin carboxyl carrier protein, biotin carboxylase and 2 subunits each of ACCase subunit alpha and ACCase plastid-coded subunit beta (accD). Zn(2+) is required as a cofactor.

It localises to the plastid. Its subcellular location is the chloroplast stroma. It catalyses the reaction N(6)-carboxybiotinyl-L-lysyl-[protein] + acetyl-CoA = N(6)-biotinyl-L-lysyl-[protein] + malonyl-CoA. It functions in the pathway lipid metabolism; malonyl-CoA biosynthesis; malonyl-CoA from acetyl-CoA: step 1/1. Component of the acetyl coenzyme A carboxylase (ACC) complex. Biotin carboxylase (BC) catalyzes the carboxylation of biotin on its carrier protein (BCCP) and then the CO(2) group is transferred by the transcarboxylase to acetyl-CoA to form malonyl-CoA. The sequence is that of Acetyl-coenzyme A carboxylase carboxyl transferase subunit beta, chloroplastic from Carica papaya (Papaya).